The following is a 381-amino-acid chain: 6-oxocyclohex-1-ene-1-carbonyl-CoA hydrolase (381 aa).

It belongs to the enoyl-CoA hydratase/isomerase family. As to quaternary structure, homohexamer.

The enzyme catalyses 6-oxocyclohex-1-ene-1-carbonyl-CoA + 2 H2O = 3-hydroxy-6-carboxyhexanoyl-CoA + H(+). The protein operates within aromatic compound metabolism; benzoyl-CoA degradation. Its function is as follows. Involved in the central benzoyl-CoA catabolism. Catalyzes the addition of one molecule of water to the double bond and the hydrolytic cleavage of C-C bond in the alicyclic ring, 6-oxocyclohex-1-ene-1-carbonyl-CoA (6-OCH-CoA) to yield 3-hydroxypimelyl-CoA. The chain is 6-oxocyclohex-1-ene-1-carbonyl-CoA hydrolase from Geobacter metallireducens (strain ATCC 53774 / DSM 7210 / GS-15).